The following is a 107-amino-acid chain: Iron-sulfur cluster assembly protein CyaY (107 aa).

Belongs to the frataxin family.

Involved in iron-sulfur (Fe-S) cluster assembly. May act as a regulator of Fe-S biogenesis. This Neisseria meningitidis serogroup A / serotype 4A (strain DSM 15465 / Z2491) protein is Iron-sulfur cluster assembly protein CyaY.